Reading from the N-terminus, the 356-residue chain is Protein RecA (356 aa).

Position 68 to 75 (68 to 75 (GQESSGKT)) interacts with ATP.

This sequence belongs to the RecA family.

The protein resides in the cytoplasm. Functionally, can catalyze the hydrolysis of ATP in the presence of single-stranded DNA, the ATP-dependent uptake of single-stranded DNA by duplex DNA, and the ATP-dependent hybridization of homologous single-stranded DNAs. It interacts with LexA causing its activation and leading to its autocatalytic cleavage. The sequence is that of Protein RecA from Thermotoga sp. (strain RQ2).